Here is a 358-residue protein sequence, read N- to C-terminus: Chorismate synthase (358 aa).

R47 serves as a coordination point for NADP(+). Residues 124–126 (RSS), 240–241 (NA), G284, 299–303 (KPVAT), and R325 contribute to the FMN site.

The protein belongs to the chorismate synthase family. In terms of assembly, homotetramer. It depends on FMNH2 as a cofactor.

The enzyme catalyses 5-O-(1-carboxyvinyl)-3-phosphoshikimate = chorismate + phosphate. It functions in the pathway metabolic intermediate biosynthesis; chorismate biosynthesis; chorismate from D-erythrose 4-phosphate and phosphoenolpyruvate: step 7/7. Catalyzes the anti-1,4-elimination of the C-3 phosphate and the C-6 proR hydrogen from 5-enolpyruvylshikimate-3-phosphate (EPSP) to yield chorismate, which is the branch point compound that serves as the starting substrate for the three terminal pathways of aromatic amino acid biosynthesis. This reaction introduces a second double bond into the aromatic ring system. In Phocaeicola vulgatus (strain ATCC 8482 / DSM 1447 / JCM 5826 / CCUG 4940 / NBRC 14291 / NCTC 11154) (Bacteroides vulgatus), this protein is Chorismate synthase.